The primary structure comprises 297 residues: 4-hydroxy-tetrahydrodipicolinate synthase (297 aa).

Thr47 provides a ligand contact to pyruvate. Tyr136 acts as the Proton donor/acceptor in catalysis. Lys165 acts as the Schiff-base intermediate with substrate in catalysis. Thr206 is a pyruvate binding site.

The protein belongs to the DapA family. In terms of assembly, homotetramer; dimer of dimers.

The protein localises to the cytoplasm. The enzyme catalyses L-aspartate 4-semialdehyde + pyruvate = (2S,4S)-4-hydroxy-2,3,4,5-tetrahydrodipicolinate + H2O + H(+). The protein operates within amino-acid biosynthesis; L-lysine biosynthesis via DAP pathway; (S)-tetrahydrodipicolinate from L-aspartate: step 3/4. Functionally, catalyzes the condensation of (S)-aspartate-beta-semialdehyde [(S)-ASA] and pyruvate to 4-hydroxy-tetrahydrodipicolinate (HTPA). This Sulfurovum sp. (strain NBC37-1) protein is 4-hydroxy-tetrahydrodipicolinate synthase.